Consider the following 233-residue polypeptide: Small ribosomal subunit protein uS2c (233 aa).

Belongs to the universal ribosomal protein uS2 family.

It is found in the plastid. The protein localises to the apicoplast. This is Small ribosomal subunit protein uS2c from Toxoplasma gondii.